Here is a 206-residue protein sequence, read N- to C-terminus: Outer-membrane lipoprotein carrier protein (206 aa).

Positions methionine 1–alanine 21 are cleaved as a signal peptide.

It belongs to the LolA family. Monomer.

It localises to the periplasm. Its function is as follows. Participates in the translocation of lipoproteins from the inner membrane to the outer membrane. Only forms a complex with a lipoprotein if the residue after the N-terminal Cys is not an aspartate (The Asp acts as a targeting signal to indicate that the lipoprotein should stay in the inner membrane). The polypeptide is Outer-membrane lipoprotein carrier protein (Nitrosomonas europaea (strain ATCC 19718 / CIP 103999 / KCTC 2705 / NBRC 14298)).